Here is a 457-residue protein sequence, read N- to C-terminus: Cyclic dof factor 2 (457 aa).

The interval 1-130 (MADPAIKLFG…GGTACSQEGK (130 aa)) is disordered. Residues 22 to 35 (DSSSSYTGFLTETQ) show a composition bias toward polar residues. Acidic residues-rich tracts occupy residues 45-54 (TGDDDDEEMG) and 62-73 (EGDDVGDGGGES). Basic and acidic residues-rich tracts occupy residues 74–94 (ETDKKEEKDSECQEESLRNES) and 106–118 (EKTETTKAAKTNE). A Dof-type zinc finger spans residues 138-192 (LPCPRCNSMETKFCYYNNYNVNQPRHFCKKCQRYWTAGGTMRNVPVGAGRRKNKS). Cys140, Cys143, Cys165, and Cys168 together coordinate Zn(2+). 2 disordered regions span residues 334-377 (QPNS…KSKP) and 417-457 (AFRS…HESS). The span at 337–346 (SPSGSNPNSP) shows a compositional bias: low complexity.

As to quaternary structure, interacts with ADO2 (via kelch repeats) and ADO3 (via kelch repeats). Expressed in the vasculature of cotyledons and hypocotyls, leaves and roots.

The protein localises to the nucleus. Its function is as follows. Transcription factor that binds specifically to a 5'-AA[AG]G-3' consensus core sequence. Regulates a photoperiodic flowering response. Transcriptional repressor of 'CONSTANS' expression. The stability of CDF2 is controlled by 'GIGANTEA' and redundantly by ADO3, ADO2 and/or ADO1. This Arabidopsis thaliana (Mouse-ear cress) protein is Cyclic dof factor 2 (CDF2).